Reading from the N-terminus, the 387-residue chain is 3-ketoacyl-CoA thiolase (387 aa).

Catalysis depends on Cys91, which acts as the Acyl-thioester intermediate. Active-site proton acceptor residues include His343 and Cys373.

Belongs to the thiolase-like superfamily. Thiolase family. Heterotetramer of two alpha chains (FadB) and two beta chains (FadA).

The protein localises to the cytoplasm. The catalysed reaction is an acyl-CoA + acetyl-CoA = a 3-oxoacyl-CoA + CoA. The protein operates within lipid metabolism; fatty acid beta-oxidation. Catalyzes the final step of fatty acid oxidation in which acetyl-CoA is released and the CoA ester of a fatty acid two carbons shorter is formed. In Aliivibrio fischeri (strain ATCC 700601 / ES114) (Vibrio fischeri), this protein is 3-ketoacyl-CoA thiolase.